Here is a 533-residue protein sequence, read N- to C-terminus: Tyrosine/DOPA decarboxylase 3 (533 aa).

The residue at position 319 (Lys-319) is an N6-(pyridoxal phosphate)lysine.

Belongs to the group II decarboxylase family. Homodimer. The cofactor is pyridoxal 5'-phosphate. In terms of tissue distribution, roots.

It catalyses the reaction L-tyrosine + H(+) = tyramine + CO2. The catalysed reaction is L-dopa + H(+) = dopamine + CO2. It carries out the reaction 5-hydroxy-L-tryptophan + H(+) = serotonin + CO2. In terms of biological role, marginally higher substrate specificity for L-DOPA over L-tyrosine. This Papaver somniferum (Opium poppy) protein is Tyrosine/DOPA decarboxylase 3 (TYDC3).